The following is a 1064-amino-acid chain: Lysine-specific demethylase 4A (1064 aa).

A2 is subject to N-acetylalanine. The JmjN domain occupies 14-56 (IMTFYPTMEEFRNFSRYIAYIESQGAHRAGLAKVVPPKEWKPR). Y132 provides a ligand contact to 2-oxoglutarate. The 167-residue stretch at 142 to 308 (EKHVDEWNIG…YGKQAVLCSC (167 aa)) folds into the JmjC domain. Residues H188 and E190 each contribute to the Fe cation site. 2-oxoglutarate is bound by residues N198 and K206. Positions 234 and 240 each coordinate Zn(2+). Residue K241 participates in 2-oxoglutarate binding. H276 lines the Fe cation pocket. Residues C306 and C308 each contribute to the Zn(2+) site. The tract at residues 358 to 384 (ELPPRAGNEEECPEEDMEGVEDGEEGD) is disordered. Residues 366–382 (EEECPEEDMEGVEDGEE) are compositionally biased toward acidic residues. K471 is covalently cross-linked ((Microbial infection) Glycyl lysine isopeptide (Lys-Gly) (interchain with G-Cter in SUMO)). Disordered stretches follow at residues 501 to 537 (FSGS…RAQG) and 616 to 641 (SDDE…KPLS). Over residues 509 to 532 (SSSLGSGSSRDSISSDSETSEPLS) the composition is skewed to low complexity. S523 bears the Phosphoserine mark. Residues 597-638 (RQPLSKLPRHHPLVLQECVSDDETSEQLTPEEEAEETEAWAK) are interaction with NCOR1. Positions 616-634 (SDDETSEQLTPEEEAEETE) are enriched in acidic residues. The PHD-type 1 zinc finger occupies 709 to 767 (MCFTSTGCSTDINLSTPYLEEDGTSILVSCKKCSVRVHASCYGVPPAKASEDWMCSRCS). The C2HC pre-PHD-type zinc-finger motif lies at 772 to 805 (EEDCCLCSLRGGALQRANDDRWVHVSCAVAILEA). The PHD-type 2 zinc finger occupies 828–885 (LKCIFCKKRRKRTAGCCVQCSHGRCPTAFHVSCAQAAGVMMQPDDWPFVVFITCFRHK). 2 consecutive Tudor domains span residues 897-954 (QSIT…CLQF) and 955-1011 (GPPA…EELP).

It belongs to the JHDM3 histone demethylase family. As to quaternary structure, interacts with histone deacetylase proteins HDAC1, HDAC2 and HDAC3. Interacts with RB and NCOR1. Interacts with VRK1. Interacts with FBXO22; this interaction promotes KDM4A ubiquitination. (Microbial infection) Interacts with HTLV-1 Tax protein. The cofactor is Fe(2+). In terms of processing, (Microbial infection) SUMOylated by human herpesvirus 8 E3 SUMO-protein ligase K-bZIP/K8 at Lys-471; thereby modulating the chromatin binding and histone demethylase activity of KDM4A. Post-translationally, ubiquitinated by RNF8 and RNF168 following DNA damage, leading to its degradation. Degradation promotes accessibility of H4K20me2 mark for DNA repair protein TP53BP1, which is then recruited. Also ubiquitinated by the SCF(FBXO22) complex; leading to proteasomal degradation. Ubiquitous.

The protein resides in the nucleus. The catalysed reaction is N(6),N(6),N(6)-trimethyl-L-lysyl(9)-[histone H3] + 2 2-oxoglutarate + 2 O2 = N(6)-methyl-L-lysyl(9)-[histone H3] + 2 formaldehyde + 2 succinate + 2 CO2. It catalyses the reaction N(6),N(6),N(6)-trimethyl-L-lysyl(36)-[histone H3] + 2 2-oxoglutarate + 2 O2 = N(6)-methyl-L-lysyl(36)-[histone H3] + 2 formaldehyde + 2 succinate + 2 CO2. Several specific inhibitors are being developed and tested. In terms of biological role, histone demethylase that specifically demethylates 'Lys-9' and 'Lys-36' residues of histone H3, thereby playing a central role in histone code. Does not demethylate histone H3 'Lys-4', H3 'Lys-27' nor H4 'Lys-20'. Demethylates trimethylated H3 'Lys-9' and H3 'Lys-36' residue, while it has no activity on mono- and dimethylated residues. Demethylation of Lys residue generates formaldehyde and succinate. Participates in transcriptional repression of ASCL2 and E2F-responsive promoters via the recruitment of histone deacetylases and NCOR1, respectively. Functionally, crucial for muscle differentiation, promotes transcriptional activation of the Myog gene by directing the removal of repressive chromatin marks at its promoter. Lacks the N-terminal demethylase domain. This is Lysine-specific demethylase 4A (KDM4A) from Homo sapiens (Human).